Reading from the N-terminus, the 739-residue chain is Polyribonucleotide nucleotidyltransferase (739 aa).

Mg(2+) contacts are provided by Asp-489 and Asp-495. A KH domain is found at 556–615 (PKIDTIKIDVDKIKIVIGKGGETIDKIIAETGVKIDIDEDGLVAIFSPDRAAIERTKEII). Residues 625–693 (DEVFQAKVVR…DKGRIDASMK (69 aa)) enclose the S1 motif domain. The disordered stretch occupies residues 699–739 (PEGYVEPEKRERSEKPRRHKEHKEKKDNNFGEFKFHKVDKK). A compositionally biased stretch (basic and acidic residues) spans 722-739 (EKKDNNFGEFKFHKVDKK).

Belongs to the polyribonucleotide nucleotidyltransferase family. It depends on Mg(2+) as a cofactor.

The protein resides in the cytoplasm. The enzyme catalyses RNA(n+1) + phosphate = RNA(n) + a ribonucleoside 5'-diphosphate. Functionally, involved in mRNA degradation. Catalyzes the phosphorolysis of single-stranded polyribonucleotides processively in the 3'- to 5'-direction. The sequence is that of Polyribonucleotide nucleotidyltransferase from Streptococcus suis (strain 98HAH33).